The sequence spans 931 residues: Isoleucine--tRNA ligase (931 aa).

Residues 58–68 carry the 'HIGH' region motif; sequence PYANGHLHCGH. E559 contributes to the L-isoleucyl-5'-AMP binding site. Residues 600 to 604 carry the 'KMSKS' region motif; that stretch reads KLSKS. K603 lines the ATP pocket. Zn(2+) is bound by residues C894, C897, C914, and C917.

This sequence belongs to the class-I aminoacyl-tRNA synthetase family. IleS type 1 subfamily. As to quaternary structure, monomer. It depends on Zn(2+) as a cofactor.

The protein localises to the cytoplasm. The enzyme catalyses tRNA(Ile) + L-isoleucine + ATP = L-isoleucyl-tRNA(Ile) + AMP + diphosphate. Catalyzes the attachment of isoleucine to tRNA(Ile). As IleRS can inadvertently accommodate and process structurally similar amino acids such as valine, to avoid such errors it has two additional distinct tRNA(Ile)-dependent editing activities. One activity is designated as 'pretransfer' editing and involves the hydrolysis of activated Val-AMP. The other activity is designated 'posttransfer' editing and involves deacylation of mischarged Val-tRNA(Ile). This chain is Isoleucine--tRNA ligase, found in Legionella pneumophila (strain Paris).